Reading from the N-terminus, the 118-residue chain is Small ribosomal subunit protein uS13 (118 aa).

Residues 97–118 are disordered; the sequence is VRGQRTKTNARTCKGPRKAIKK.

The protein belongs to the universal ribosomal protein uS13 family. As to quaternary structure, part of the 30S ribosomal subunit. Forms a loose heterodimer with protein S19. Forms two bridges to the 50S subunit in the 70S ribosome.

Located at the top of the head of the 30S subunit, it contacts several helices of the 16S rRNA. In the 70S ribosome it contacts the 23S rRNA (bridge B1a) and protein L5 of the 50S subunit (bridge B1b), connecting the 2 subunits; these bridges are implicated in subunit movement. Contacts the tRNAs in the A and P-sites. This is Small ribosomal subunit protein uS13 from Buchnera aphidicola subsp. Schizaphis graminum (strain Sg).